Here is a 389-residue protein sequence, read N- to C-terminus: Chalcone synthase (389 aa).

The active site involves cysteine 164.

Belongs to the thiolase-like superfamily. Chalcone/stilbene synthases family.

The catalysed reaction is (E)-4-coumaroyl-CoA + 3 malonyl-CoA + 3 H(+) = 2',4,4',6'-tetrahydroxychalcone + 3 CO2 + 4 CoA. It functions in the pathway secondary metabolite biosynthesis; flavonoid biosynthesis. In terms of biological role, the primary product of this enzyme is 4,2',4',6'-tetrahydroxychalcone (also termed naringenin-chalcone or chalcone) which can under specific conditions spontaneously isomerize into naringenin. This is Chalcone synthase (CHS) from Catharanthus roseus (Madagascar periwinkle).